The sequence spans 430 residues: Glutamyl-tRNA reductase (430 aa).

Residues 50–53 (TCNR), serine 108, 113–115 (EPQ), and glutamine 119 contribute to the substrate site. The active-site Nucleophile is the cysteine 51. 188–193 (GAGEMA) provides a ligand contact to NADP(+).

The protein belongs to the glutamyl-tRNA reductase family. In terms of assembly, homodimer.

The enzyme catalyses (S)-4-amino-5-oxopentanoate + tRNA(Glu) + NADP(+) = L-glutamyl-tRNA(Glu) + NADPH + H(+). It functions in the pathway porphyrin-containing compound metabolism; protoporphyrin-IX biosynthesis; 5-aminolevulinate from L-glutamyl-tRNA(Glu): step 1/2. In terms of biological role, catalyzes the NADPH-dependent reduction of glutamyl-tRNA(Glu) to glutamate 1-semialdehyde (GSA). The polypeptide is Glutamyl-tRNA reductase (Lawsonia intracellularis (strain PHE/MN1-00)).